Reading from the N-terminus, the 145-residue chain is D-aminoacyl-tRNA deacylase (145 aa).

The Gly-cisPro motif, important for rejection of L-amino acids motif lies at 137-138; the sequence is GP.

Belongs to the DTD family. As to quaternary structure, homodimer.

The protein resides in the cytoplasm. It carries out the reaction glycyl-tRNA(Ala) + H2O = tRNA(Ala) + glycine + H(+). The enzyme catalyses a D-aminoacyl-tRNA + H2O = a tRNA + a D-alpha-amino acid + H(+). Functionally, an aminoacyl-tRNA editing enzyme that deacylates mischarged D-aminoacyl-tRNAs. Also deacylates mischarged glycyl-tRNA(Ala), protecting cells against glycine mischarging by AlaRS. Acts via tRNA-based rather than protein-based catalysis; rejects L-amino acids rather than detecting D-amino acids in the active site. By recycling D-aminoacyl-tRNA to D-amino acids and free tRNA molecules, this enzyme counteracts the toxicity associated with the formation of D-aminoacyl-tRNA entities in vivo and helps enforce protein L-homochirality. This chain is D-aminoacyl-tRNA deacylase, found in Deinococcus radiodurans (strain ATCC 13939 / DSM 20539 / JCM 16871 / CCUG 27074 / LMG 4051 / NBRC 15346 / NCIMB 9279 / VKM B-1422 / R1).